Consider the following 1463-residue polypeptide: Secretory phospholipase A2 receptor (1463 aa).

The signal sequence occupies residues 1–20 (MLLSPSLLLLLLLGAPRGCA). The Extracellular segment spans residues 21–1397 (EGVAAALTPE…ALPEKGPSHS (1377 aa)). Residues 38–161 (KGIFVIQSES…GSGGGDICEY (124 aa)) form the Ricin B-type lectin domain. Disulfide bonds link cysteine 51–cysteine 64, cysteine 89–cysteine 106, cysteine 178–cysteine 204, cysteine 192–cysteine 219, cysteine 260–cysteine 354, cysteine 330–cysteine 346, cysteine 406–cysteine 501, cysteine 478–cysteine 493, cysteine 617–cysteine 634, cysteine 699–cysteine 796, cysteine 774–cysteine 788, cysteine 840–cysteine 937, cysteine 914–cysteine 929, and cysteine 1067–cysteine 1087. Asparagine 93 carries an N-linked (GlcNAc...) asparagine glycan. The Fibronectin type-II domain occupies 173–221 (THGMPCMFPFQYNHQWHHECTREGREDDLLWCATTSRYERDEKWGFCPD). 8 C-type lectin domains span residues 238 to 355 (NSHI…YICK), 385 to 502 (YNRN…YICK), 522 to 643 (HGGF…MSLC), 673 to 797 (GLAS…WICK), 819 to 938 (YQDA…SICK), 965 to 1096 (FNYK…GFVC), 1121 to 1232 (YGNR…GAIC), and 1257 to 1378 (FKSN…FICK). A glycan (N-linked (GlcNAc...) asparagine) is linked at asparagine 454. Residue asparagine 1123 is glycosylated (N-linked (GlcNAc...) asparagine). Cystine bridges form between cysteine 1209–cysteine 1223, cysteine 1280–cysteine 1377, and cysteine 1354–cysteine 1369. A helical membrane pass occupies residues 1398–1418 (IIPLAVVLTLIVIVAICTLSF). The Cytoplasmic segment spans residues 1419 to 1463 (CIYKHNGGFFRRLAGFRNPYYPATNFSTVYLEENILISDLEKSDQ). The short motif at 1436–1442 (NPYYPAT) is the Endocytosis signal element.

In terms of assembly, interacts with sPLA2-IB/PLA2G1B; this interaction mediates intracellular signaling as well as clearance of extracellular sPLA2-IB/PLA2G1B via endocytotic pathway. Interacts with sPLA2-X/PLA2G10; this interaction mediates sPLA2-X/PLA2G10 clearance and inactivation. The secretory phospholipase A2 receptor form may be produced by the action of metalloproteinases. It contains all extracellular domains and only lacks transmembrane and cytosolic regions. It is however unclear whether this form is produced by proteolytic cleavage as suggested by some experiments, or by alternative splicing, as in the case of isoform 2 that shares all characteristics of secretory phospholipase A2 receptor form. As to expression, expressed in podocytes (at protein level). Present in lung macrophage (at protein level). Highly expressed in kidney. Also expressed in pancreas, amnion, choriodecidua and placenta. Isoform 2 is expressed at much lower level.

It is found in the cell membrane. It localises to the secreted. In terms of biological role, receptor for secretory phospholipase A2 (sPLA2). Acts as a receptor for phospholipase sPLA2-IB/PLA2G1B but not sPLA2-IIA/PLA2G2A. Also able to bind to snake PA2-like toxins. Although its precise function remains unclear, binding of sPLA2 to its receptor participates in both positive and negative regulation of sPLA2 functions as well as clearance of sPLA2. Binding of sPLA2-IB/PLA2G1B induces various effects depending on the cell type, such as activation of the mitogen-activated protein kinase (MAPK) cascade to induce cell proliferation, the production of lipid mediators, selective release of arachidonic acid in bone marrow-derived mast cells. In neutrophils, binding of sPLA2-IB/PLA2G1B can activate p38 MAPK to stimulate elastase release and cell adhesion. May be involved in responses in pro-inflammatory cytokine productions during endotoxic shock. Also has endocytic properties and rapidly internalizes sPLA2 ligands, which is particularly important for the clearance of extracellular sPLA2s to protect their potent enzymatic activities. The soluble secretory phospholipase A2 receptor form is circulating and acts as a negative regulator of sPLA2 functions by blocking the biological functions of sPLA2-IB/PLA2G1B. In podocytes, binding of sPLA2-IB/PLA2G1B can regulate podocyte survival and glomerular homeostasis. This Homo sapiens (Human) protein is Secretory phospholipase A2 receptor (PLA2R1).